Here is a 131-residue protein sequence, read N- to C-terminus: Small ribosomal subunit protein uS8 (131 aa).

Belongs to the universal ribosomal protein uS8 family. As to quaternary structure, part of the 30S ribosomal subunit. Contacts proteins S5 and S12.

Its function is as follows. One of the primary rRNA binding proteins, it binds directly to 16S rRNA central domain where it helps coordinate assembly of the platform of the 30S subunit. The protein is Small ribosomal subunit protein uS8 of Zymomonas mobilis subsp. mobilis (strain ATCC 31821 / ZM4 / CP4).